A 43-amino-acid polypeptide reads, in one-letter code: Potassium channel toxin gamma-KTx 4.1 (43 aa).

4 disulfide bridges follow: cysteine 5–cysteine 23, cysteine 11–cysteine 34, cysteine 20–cysteine 39, and cysteine 24–cysteine 41.

The protein belongs to the ergtoxin family. Gamma-KTx 4 subfamily. Expressed by the venom gland.

The protein localises to the secreted. Its function is as follows. Reversibly blocks Kv11/ERG potassium channels. The chain is Potassium channel toxin gamma-KTx 4.1 from Centruroides limpidus (Mexican scorpion).